A 750-amino-acid chain; its full sequence is Meiosis protein mei2 (750 aa).

Residues 1–20 (MIMETESPLSITSPSPSDST) are disordered. The segment covering 7–20 (SPLSITSPSPSDST) has biased composition (polar residues). 2 consecutive RRM domains span residues 195 to 270 (RYLF…FCQR) and 293 to 361 (LLLN…CLQV).

As to quaternary structure, binds rad24 when phosphorylated. Inactivated by phosphorylation by ran1/pat1.

In terms of biological role, crucial for commitment to meiosis but it is not sufficient itself for the commitment. May be a splicing regulator. The polypeptide is Meiosis protein mei2 (mei2) (Schizosaccharomyces pombe (strain 972 / ATCC 24843) (Fission yeast)).